The following is a 194-amino-acid chain: Peptidyl-tRNA hydrolase (194 aa).

Tyr-16 is a tRNA binding site. The active-site Proton acceptor is the His-21. TRNA is bound by residues Phe-67, Asn-69, and Asn-115.

This sequence belongs to the PTH family. In terms of assembly, monomer.

The protein resides in the cytoplasm. It carries out the reaction an N-acyl-L-alpha-aminoacyl-tRNA + H2O = an N-acyl-L-amino acid + a tRNA + H(+). Its function is as follows. Hydrolyzes ribosome-free peptidyl-tRNAs (with 1 or more amino acids incorporated), which drop off the ribosome during protein synthesis, or as a result of ribosome stalling. Catalyzes the release of premature peptidyl moieties from peptidyl-tRNA molecules trapped in stalled 50S ribosomal subunits, and thus maintains levels of free tRNAs and 50S ribosomes. This chain is Peptidyl-tRNA hydrolase, found in Citrobacter koseri (strain ATCC BAA-895 / CDC 4225-83 / SGSC4696).